Reading from the N-terminus, the 1172-residue chain is Thrombospondin-2 (1172 aa).

Residues 1–18 (MVWRLVLLALWVWPSTQA) form the signal peptide. Residues 19–215 (GHQDKDTTFD…LQNVHLVFEN (197 aa)) form the Laminin G-like domain. The segment at 19–232 (GHQDKDTTFD…KKGCQQGQGA (214 aa)) is heparin-binding. N151, N316, and N330 each carry an N-linked (GlcNAc...) asparagine glycan. The region spanning 318-375 (SACWQDGRFFAENETWVVDSCTTCTCKKFKTICHQITCPPATCASPSFVEGECCPSCL) is the VWFC domain. TSP type-1 domains follow at residues 381-431 (EEGW…SKCD), 437-492 (DGGW…APCP), and 494-549 (DGRW…RSCP). Disulfide bonds link C393–C425, C397–C430, C408–C415, C449–C486, C453–C491, C464–C476, C506–C543, C510–C548, C521–C533, C553–C564, C558–C574, C577–C588, C594–C610, C601–C619, C622–C646, C652–C665, C659–C678, C680–C691, C707–C715, C720–C740, C756–C776, C779–C799, C815–C835, C838–C858, C876–C896, C912–C932, and C948–C1169. N-linked (GlcNAc...) asparagine glycosylation is present at N457. Residues 549 to 589 (PVDGCLSNPCFPGAQCSSFPDGSWSCGSCPVGFLGNGTHCE) form the EGF-like 1 domain. N584 carries N-linked (GlcNAc...) asparagine glycosylation. One can recognise an EGF-like 2 domain in the interval 648-692 (PENPCKDKTHNCHKHAECIYLGHFSDPMYKCECQTGYAGDGLICG). 8 TSP type-3 repeats span residues 693-728 (EDSD…NSGQ), 729-764 (EDFD…NPRQ), 765-787 (ADYD…NPAQ), 788-823 (IDTD…NTDQ), 824-846 (RDTD…NPDQ), 847-884 (TDVD…NANQ), 885-920 (ADHD…NPDQ), and 921-956 (EDLD…AISE). An N-linked (GlcNAc...) asparagine glycan is attached at N710. A disordered region spans residues 843 to 931 (NPDQTDVDND…DLDGDGRGDI (89 aa)). The segment covering 847–866 (TDVDNDLVGDQCDNNEDIDD) has biased composition (acidic residues). Residues 870 to 884 (QNNQDNCPYISNANQ) are compositionally biased toward polar residues. Over residues 896 to 905 (CDPDDDNDGV) the composition is skewed to acidic residues. Positions 928 to 930 (RGD) match the Cell attachment site motif. One can recognise a TSP C-terminal domain in the interval 960 to 1172 (RNFQMVPLDP…SDLKYECRDI (213 aa)). The N-linked (GlcNAc...) asparagine glycan is linked to N1069.

The protein belongs to the thrombospondin family. As to quaternary structure, homotrimer; disulfide-linked. Interacts (via the TSP type I repeats) with CD36; the interaction conveys an antiangiogenic effect. Interacts (via the TSP type I repeats) with HRG; the interaction blocks the antiangiogenic effect of THBS2 with CD36. Can bind to fibrinogen, fibronectin, laminin and type V collagen. High expression in invertebral disk tissue.

Its function is as follows. Adhesive glycoprotein that mediates cell-to-cell and cell-to-matrix interactions. Ligand for CD36 mediating antiangiogenic properties. This is Thrombospondin-2 (THBS2) from Homo sapiens (Human).